The chain runs to 308 residues: MKHYEVEIRDAKTREKLCFLDKVEPQATISEIKTLFTKTHPQWYPARQSLRLDPKGKSLKDEDVLQKLPVGTTATLYFRDLGAQISWVTVFLTEYAGPLFIYLLFYFRVPFIYGRKYDFTSSRHTVVHLACMCHSFHYIKRLLETLFVHRFSHGTMPLRNIFKNCTYYWGFAAWMAYYINHPLYTPPTYGVQQVKLALAIFVICQLGNFSIHMALRDLRPAGSKTRKIPYPTKNPFTWLFLLVSCPNYTYEVGSWIGFAIMTQCVPVALFSLVGFTQMTIWAKGKHRSYLKEFRDYPPLRMPIIPFLL.

The Cytoplasmic segment spans residues 1-86 (MKHYEVEIRD…YFRDLGAQIS (86 aa)). At lysine 22 the chain carries N6-acetyllysine. Serine 58 carries the phosphoserine modification. Lysine 60 carries the N6-acetyllysine modification. A helical transmembrane segment spans residues 87–106 (WVTVFLTEYAGPLFIYLLFY). Over 107–124 (FRVPFIYGRKYDFTSSRH) the chain is Lumenal. Residues 125–147 (TVVHLACMCHSFHYIKRLLETLF) form a helical membrane-spanning segment. Topologically, residues 148–158 (VHRFSHGTMPL) are cytoplasmic. Residues 159–180 (RNIFKNCTYYWGFAAWMAYYIN) traverse the membrane as a helical segment. The Lumenal segment spans residues 181–189 (HPLYTPPTY). Residues 190–216 (GVQQVKLALAIFVICQLGNFSIHMALR) traverse the membrane as a helical segment. The Cytoplasmic segment spans residues 217–245 (DLRPAGSKTRKIPYPTKNPFTWLFLLVSC). Residues 246–262 (PNYTYEVGSWIGFAIMT) form a helical membrane-spanning segment. Topologically, residues 263-264 (QC) are lumenal. Residues 265–292 (VPVALFSLVGFTQMTIWAKGKHRSYLKE) form a helical membrane-spanning segment. The Cytoplasmic segment spans residues 293-308 (FRDYPPLRMPIIPFLL).

It belongs to the steroid 5-alpha reductase family. As to quaternary structure, interacts with ELOVL1 and LASS2. Glycosylated. In terms of tissue distribution, expressed at high levels in brain and is also found at lower levels in several other tissues.

Its subcellular location is the endoplasmic reticulum membrane. The enzyme catalyses a very-long-chain 2,3-saturated fatty acyl-CoA + NADP(+) = a very-long-chain (2E)-enoyl-CoA + NADPH + H(+). It carries out the reaction octadecanoyl-CoA + NADP(+) = (2E)-octadecenoyl-CoA + NADPH + H(+). It catalyses the reaction (2E,7Z,10Z,13Z,16Z)-docosapentaenoyl-CoA + NADPH + H(+) = (7Z,10Z,13Z,16Z)-docosatetraenoyl-CoA + NADP(+). The catalysed reaction is (2E,7Z,10Z,13Z,16Z,19Z)-docosahexaenoyl-CoA + NADPH + H(+) = (7Z,10Z,13Z,16Z,19Z)-docosapentaenoyl-CoA + NADP(+). The enzyme catalyses (2E,8Z,11Z,14Z)-eicosatetraenoyl-CoA + NADPH + H(+) = (8Z,11Z,14Z)-eicosatrienoyl-CoA + NADP(+). It carries out the reaction (2E)-hexadecenoyl-CoA + NADPH + H(+) = hexadecanoyl-CoA + NADP(+). It functions in the pathway lipid metabolism; fatty acid biosynthesis. Its pathway is lipid metabolism; sphingolipid metabolism. Its function is as follows. Involved in both the production of very long-chain fatty acids for sphingolipid synthesis and the degradation of the sphingosine moiety in sphingolipids through the sphingosine 1-phosphate metabolic pathway. Catalyzes the last of the four reactions of the long-chain fatty acids elongation cycle. This endoplasmic reticulum-bound enzymatic process, allows the addition of 2 carbons to the chain of long- and very long-chain fatty acids/VLCFAs per cycle. This enzyme reduces the trans-2,3-enoyl-CoA fatty acid intermediate to an acyl-CoA that can be further elongated by entering a new cycle of elongation. Thereby, it participates in the production of VLCFAs of different chain lengths that are involved in multiple biological processes as precursors of membrane lipids and lipid mediators. Catalyzes the saturation step of the sphingosine 1-phosphate metabolic pathway, the conversion of trans-2-hexadecenoyl-CoA to palmitoyl-CoA. This chain is Very-long-chain enoyl-CoA reductase (Tecr), found in Rattus norvegicus (Rat).